The primary structure comprises 84 residues: Beta-cardiotoxin CTX15 (84 aa).

The first 21 residues, 1-21 (MKTLLLTLVVVTIVCLDLGYT), serve as a signal peptide directing secretion. Intrachain disulfides connect C24–C43, C36–C61, C65–C76, and C77–C82.

It belongs to the three-finger toxin family. Short-chain subfamily. Aminergic toxin sub-subfamily. As to expression, expressed by the venom gland.

The protein resides in the secreted. Acts as a beta-blocker by binding to beta-1 and beta-2 adrenergic receptors (ADRB1 and ADRB2). It dose-dependently decreases the heart rate (bradycardia), whereas conventional cardiotoxins increases it. At 100 mg/kg, intraperitoneal injection into mice provokes labored breathing, impaired locomotion, lack of response to external stimuli, and death (after 30 minutes). This chain is Beta-cardiotoxin CTX15, found in Ophiophagus hannah (King cobra).